A 904-amino-acid chain; its full sequence is Transcription factor E2F7 (904 aa).

The interval 61 to 80 (TPDRNPITPVKPVDRQPQVE) is disordered. S96 is modified (phosphoserine). The DNA-binding element occupies 143-212 (RKQKSLGLLC…VAKNQYGWHG (70 aa)). The segment covering 252–269 (GERRKDGSPDPRDPHLLD) has biased composition (basic and acidic residues). Positions 252–283 (GERRKDGSPDPRDPHLLDFSEADYPSSSANSR) are disordered. A DNA-binding region spans residues 283-368 (RKDKSLRIMS…GRKPAFKWIG (86 aa)). S411 bears the Phosphoserine mark. Residues 560–628 (LSPESRSEED…VMPKKPSSST (69 aa)) form a disordered region. S833 carries the post-translational modification Phosphoserine. Residues 846–904 (AEQSPAPATPKSIQRRHRETFFKTPGSLGDPVFRRKERNQSRNTSSAQRRLEISSSGPD) are disordered. The segment covering 886-904 (SRNTSSAQRRLEISSSGPD) has biased composition (polar residues).

It belongs to the E2F/DP family. As to quaternary structure, interacts with HIF1A. Homodimer and heterodimer: mainly forms homodimers and, to a lesser extent, heterodimers with E2F8. Dimerization is important for DNA-binding. Interacts with MN1. In terms of tissue distribution, widely expressed with highest levels in skin and thymus and very low levels in brain, muscle and stomach. Expressed in trophoblast giant cells throughout placenta development (at protein level).

The protein localises to the nucleus. In terms of biological role, atypical E2F transcription factor that participates in various processes such as angiogenesis, polyploidization of specialized cells and DNA damage response. Mainly acts as a transcription repressor that binds DNA independently of DP proteins and specifically recognizes the E2 recognition site 5'-TTTC[CG]CGC-3'. Directly represses transcription of classical E2F transcription factors such as E2F1. Acts as a regulator of S-phase by recognizing and binding the E2-related site 5'-TTCCCGCC-3' and mediating repression of G1/S-regulated genes. Plays a key role in polyploidization of cells in placenta and liver by regulating the endocycle, probably by repressing genes promoting cytokinesis and antagonizing action of classical E2F proteins (E2F1, E2F2 and/or E2F3). Required for placental development by promoting polyploidization of trophoblast giant cells. Also involved in DNA damage response: up-regulated by p53/TP53 following genotoxic stress and acts as a downstream effector of p53/TP53-dependent repression by mediating repression of indirect p53/TP53 target genes involved in DNA replication. Acts as a promoter of sprouting angiogenesis, possibly by acting as a transcription activator: associates with HIF1A, recognizes and binds the VEGFA promoter, which is different from canonical E2 recognition site, and activates expression of the VEGFA gene. Acts as a negative regulator of keratinocyte differentiation. The chain is Transcription factor E2F7 (E2f7) from Mus musculus (Mouse).